Here is a 252-residue protein sequence, read N- to C-terminus: Phosphate import ATP-binding protein PstB 2 (252 aa).

The 242-residue stretch at 6–247 folds into the ABC transporter domain; that stretch reads ISINDLSVYF…PQHKETEDYI (242 aa). 38-45 provides a ligand contact to ATP; sequence GPSGSGKS.

Belongs to the ABC transporter superfamily. Phosphate importer (TC 3.A.1.7) family. As to quaternary structure, the complex is composed of two ATP-binding proteins (PstB), two transmembrane proteins (PstC and PstA) and a solute-binding protein (PstS).

The protein resides in the cell membrane. The catalysed reaction is phosphate(out) + ATP + H2O = ADP + 2 phosphate(in) + H(+). Its function is as follows. Part of the ABC transporter complex PstSACB involved in phosphate import. Responsible for energy coupling to the transport system. The protein is Phosphate import ATP-binding protein PstB 2 of Streptococcus thermophilus (strain CNRZ 1066).